Consider the following 709-residue polypeptide: Eukaryotic translation initiation factor 3 subunit B (709 aa).

The sufficient for interaction with HCR1 and TIF32 stretch occupies residues 1 to 98 (MSINEEEYLR…LFIQYKNVAD (98 aa)). Residues 1–221 (MSINEEEYLR…GIQAWGGADF (221 aa)) are sufficient for interaction with PIC8. The region spanning 37–124 (NYVIVDGAPI…HRLLVNRLSD (88 aa)) is the RRM domain.

Belongs to the eIF-3 subunit B family. In terms of assembly, component of the eukaryotic translation initiation factor 3 (eIF-3) complex.

The protein localises to the cytoplasm. In terms of biological role, RNA-binding component of the eukaryotic translation initiation factor 3 (eIF-3) complex, which is involved in protein synthesis of a specialized repertoire of mRNAs and, together with other initiation factors, stimulates binding of mRNA and methionyl-tRNAi to the 40S ribosome. The eIF-3 complex specifically targets and initiates translation of a subset of mRNAs involved in cell proliferation. This Lodderomyces elongisporus (strain ATCC 11503 / CBS 2605 / JCM 1781 / NBRC 1676 / NRRL YB-4239) (Yeast) protein is Eukaryotic translation initiation factor 3 subunit B.